The sequence spans 346 residues: G-protein coupled receptor 42 (346 aa).

Residues 1–19 (MDTGPDQSYFSGNHWFVFS) lie on the Extracellular side of the membrane. A helical membrane pass occupies residues 20-40 (VYLLTFLVGLPLNLLALVVFV). Residues 41 to 47 (GKLRCRP) are Cytoplasmic-facing. Residues 48 to 68 (VAVDVLLLNLTASDLLLLLFL) form a helical membrane-spanning segment. At 69–90 (PFRMVEAANGMHWPLPFILCPL) the chain is on the extracellular side. Residues 91 to 111 (SGFIFFTTIYLTALFLAAVSI) form a helical membrane-spanning segment. Residues 112-132 (ERFLSVAHPLWYKTRPRLGQA) lie on the Cytoplasmic side of the membrane. A helical transmembrane segment spans residues 133–153 (GLVSVACWLLASAHCSVVYVI). Residues 154 to 178 (EFSGDISHSQGTNGTCYLEFRKDQL) are Extracellular-facing. A glycan (N-linked (GlcNAc...) asparagine) is linked at Asn-166. Residues 179–199 (AILLPVRLEMAVVLFVVPLII) traverse the membrane as a helical segment. Residues 200-222 (TSYCYSRLVWILGRGGSHRRQRR) lie on the Cytoplasmic side of the membrane. Residues 223 to 243 (VAGLVAATLLNFLVCFGPYNV) form a helical membrane-spanning segment. Residues 244–258 (SHVVGYICGESPVWR) are Extracellular-facing. A helical membrane pass occupies residues 259–279 (IYVTLLSTLNSCVDPFVYYFS). At 280-346 (SSGFQADFHE…TGGQVACAEN (67 aa)) the chain is on the cytoplasmic side. Positions 307–330 (MELKEQKGGEEQRADRPAERKTSE) are enriched in basic and acidic residues. The interval 307–346 (MELKEQKGGEEQRADRPAERKTSEHSQGCGTGGQVACAEN) is disordered.

The protein belongs to the G-protein coupled receptor 1 family.

Its subcellular location is the cell membrane. Functionally, g protein-coupled receptor that is activated by short chain fatty acids (SCFAs), such as propionate. Hence may play a role in the regulation of whole-body energy homeostasis and/or in intestinal immunity. The chain is G-protein coupled receptor 42 (GPR42) from Homo sapiens (Human).